Reading from the N-terminus, the 459-residue chain is Protein phosphatase 1M (459 aa).

Residues 1–10 (MSAGWFRRRF) show a composition bias toward basic residues. Residues 1–64 (MSAGWFRRRF…SRPVRSPARG (64 aa)) are disordered. Positions 14 to 27 (EPLPAPRPPGPHAS) are enriched in pro residues. Over residues 38–48 (RGSSSSPGAAD) the composition is skewed to low complexity. Mn(2+) contacts are provided by aspartate 125 and glycine 126. One can recognise a PPM-type phosphatase domain in the interval 162–459 (MHLNGRCICP…HSQGQESSDH (298 aa)).

It belongs to the PP2C family. Requires Mg(2+) as cofactor. The cofactor is Mn(2+).

It localises to the nucleus. It catalyses the reaction O-phospho-L-seryl-[protein] + H2O = L-seryl-[protein] + phosphate. It carries out the reaction O-phospho-L-threonyl-[protein] + H2O = L-threonyl-[protein] + phosphate. This Homo sapiens (Human) protein is Protein phosphatase 1M (PPM1M).